Consider the following 425-residue polypeptide: Melibiose permease (425 aa).

The Cytoplasmic portion of the chain corresponds to 1 to 13; that stretch reads MNTTTCTHKDNPN. Residues 14–34 traverse the membrane as a helical segment; sequence FWIFGLFFFLYFFIMATCFPF. Residues 35 to 50 are Periplasmic-facing; it reads LPIWLSDIIGLNKTHT. A helical transmembrane segment spans residues 51 to 71; the sequence is GIVFSCISLSAIAFQPVLGVI. Topologically, residues 72-80 are cytoplasmic; the sequence is SDKLGLKKH. A helical transmembrane segment spans residues 81 to 101; sequence LLWIISVLLFLFAPFFLYVFA. At 102–107 the chain is on the periplasmic side; the sequence is PLLKTN. A helical transmembrane segment spans residues 108–128; that stretch reads IWLGALSGGLYIGFVFSAGSG. Over 129-149 the chain is Cytoplasmic; that stretch reads AIEAYIERVSRNSAFEYGKAR. The chain crosses the membrane as a helical span at residues 150–170; that stretch reads MFGCLGWGLCASTGGILFGID. Position 171 (Pro171) is a topological domain, periplasmic. A helical transmembrane segment spans residues 172-192; sequence SYVFWMGSAAALLLMLLLVVA. Residues 193-227 lie on the Cytoplasmic side of the membrane; the sequence is KPKPNQTAQVMNALGANQPQITAKKVFNLFRQRRM. The helical transmembrane segment at 228-248 threads the bilayer; the sequence is WMFILYVIGVACVYDVFDQQF. The Periplasmic segment spans residues 249–267; the sequence is ATFFKTFFATPQEGTRAFG. Residues 268-288 form a helical membrane-spanning segment; sequence FATTAGEICNAIIMFCSPWII. Topologically, residues 289 to 297 are cytoplasmic; the sequence is NRIGAKNTL. A helical transmembrane segment spans residues 298 to 318; that stretch reads LIAGLIMATRIIGSSFATTAV. At 319–325 the chain is on the periplasmic side; that stretch reads EVIALKM. Residues 326-346 traverse the membrane as a helical segment; sequence LHALEVPFLLVGAFKYITGVF. Over 347 to 353 the chain is Cytoplasmic; it reads DTRLSAT. A helical membrane pass occupies residues 354 to 374; sequence IYLIGFQFAKQSAAIFLSAFA. The Periplasmic portion of the chain corresponds to 375 to 385; that stretch reads GNMYDRIGFQE. A helical transmembrane segment spans residues 386–406; it reads TYLMLGCFVLAITVVSAFTLS. The Cytoplasmic portion of the chain corresponds to 407–425; sequence SRQEIAAAAGAAALTSQSR.

This sequence belongs to the major facilitator superfamily. Oligosaccharide:H(+) symporter (OHS) (TC 2.A.1.5) family.

Its subcellular location is the cell inner membrane. Its function is as follows. Responsible for transport of melibiose into the cell, with the concomitant import of a proton (symport system). Can also transport lactose, and has weak activity with maltose. Cannot transport the analog methyl-1-thio-beta,D-galactopyranoside (TMG). This chain is Melibiose permease, found in Enterobacter cloacae subsp. cloacae (strain ATCC 13047 / DSM 30054 / NBRC 13535 / NCTC 10005 / WDCM 00083 / NCDC 279-56).